A 240-amino-acid polypeptide reads, in one-letter code: 45 kDa antigen (240 aa).

Fibronectin type-III domains follow at residues 1–109 (EFPD…FHTL) and 110–210 (ANGT…KSGH).

The sequence is that of 45 kDa antigen from Taenia ovis (Sheep tapeworm).